The sequence spans 156 residues: Small ribosomal subunit protein uS7 (156 aa).

Belongs to the universal ribosomal protein uS7 family. In terms of assembly, part of the 30S ribosomal subunit. Contacts proteins S9 and S11.

Its function is as follows. One of the primary rRNA binding proteins, it binds directly to 16S rRNA where it nucleates assembly of the head domain of the 30S subunit. Is located at the subunit interface close to the decoding center, probably blocks exit of the E-site tRNA. This Pseudomonas aeruginosa (strain LESB58) protein is Small ribosomal subunit protein uS7.